Here is a 493-residue protein sequence, read N- to C-terminus: Sorting nexin-4 (493 aa).

The disordered stretch occupies residues 1–77; the sequence is MAVIDQDNFS…ILDCTVSDPH (77 aa). Polar residues predominate over residues 7–28; that stretch reads DNFSNISWHSEQNAESAASTAQ. Basic and acidic residues predominate over residues 56 to 65; the sequence is MEHDELDHSG. The region spanning 68-190 is the PX domain; sequence ILDCTVSDPH…AFLESPDWNA (123 aa). Positions 111, 113, 137, and 156 each coordinate a 1,2-diacyl-sn-glycero-3-phospho-(1D-myo-inositol-3-phosphate). Coiled coils occupy residues 248–292, 338–363, and 405–442; these read EIKE…QKLI, SGTL…EYLN, and EQAR…QVSR.

This sequence belongs to the sorting nexin family.

The protein localises to the cytoplasm. The protein resides in the membrane. It localises to the endosome membrane. Functionally, sorting nexin, involved in the separation or division of vacuoles throughout the entire life cycle of the cells. Involved in retrieval of late-Golgi SNAREs from post-Golgi endosomes to the trans-Golgi network, for cytoplasm to vacuole transport (Cvt), and autophagy of large cargos including mitophagy, pexophagy and glycophagy. In Neurospora crassa (strain ATCC 24698 / 74-OR23-1A / CBS 708.71 / DSM 1257 / FGSC 987), this protein is Sorting nexin-4 (vsp-5).